We begin with the raw amino-acid sequence, 327 residues long: Asnovolin J 5',6'-dehydrogenase nvfM (327 aa).

The helical transmembrane segment at 9 to 29 (VAIVGASGVTGGSIVNGLLAL) threads the bilayer. NADP(+) is bound by residues 13-19 (GASGVTG) and Lys47. The active-site Proton acceptor is the Lys130.

It belongs to the NmrA-type oxidoreductase family.

It localises to the membrane. The enzyme catalyses asnovolin K + AH2 = asnovolin A + A. It carries out the reaction chermesin D methyl ester + AH2 = asnovolin J + A. The protein operates within secondary metabolite biosynthesis; terpenoid biosynthesis. In terms of biological role, asnovolin J 5',6'-dehydrogenase; part of the gene cluster that mediates the biosynthesis of novofumigatonin, a heavily oxygenated meroterpenoid containing a unique orthoester moiety. The first step of the pathway is the synthesis of 3,5-dimethylorsellinic acid (DMOA) by the polyketide synthase nvfA via condensation of one acetyl-CoA starter unit with 3 malonyl-CoA units and 2 methylations. DMOA is then converted to farnesyl-DMOA by the farnesyltransferase nvfB. Epoxydation by FAD-dependent monooxygenase nvfK, followed by a protonation-initiated cyclization catalyzed by the terpene cyclase nvfL leads to the production of asnavolin H. The short chain dehydrogenase nvfC then as a 3-OH dehydrogenase of asnovolin H to yield chemesin D. There are two branches to synthesize asnovolin A from chemesin D. In one branch, chemesin D undergoes Baeyer-Villiger oxidation by nvfH, methylation by nvfJ, and enoyl reduction by the nvfM D enoylreductase that reduces the double bond between C-5'and C-6', to form respectively asnovolin I, asnovolin K, and asnovolin A. In the other branch, the methylation precedes the Baeyer-Villiger oxidation and the enoyl reduction to yield asnovolin A via the asnovolin J intermediate. Asnovolin A is further converted to fumigatonoid A by the Fe(II)/2-oxoglutarate-dependent dioxygenase nvfI that catalyzes an endoperoxidation reaction. The alpha/beta hydrolase nvfD then acts as an epimerase that converts fumigatonoid A to its C-5' epimer, which then undergoes spontaneous or nvfD-catalyzed lactonization. The following step utilizes the ketoreductase nvfG to produce fumigatonoid B. The dioxygenase nvfE further converts fumigatonoid B into fumigatonoid C. Finally the Fe(II)/2-oxoglutarate-dependent dioxygenase nvfF catalyzes two rounds of oxidation to transform fumigatonoid C into the end product, novofumigatonin A. The protein is Asnovolin J 5',6'-dehydrogenase nvfM of Aspergillus novofumigatus (strain IBT 16806).